The chain runs to 525 residues: Sodium-dependent lysophosphatidylcholine symporter 1 (525 aa).

The segment at 1 to 29 is disordered; that stretch reads MEKESENASCAGLLGQKNEPGSPTQSRSG. Topologically, residues 1–32 are cytoplasmic; sequence MEKESENASCAGLLGQKNEPGSPTQSRSGKHK. The chain crosses the membrane as a helical span at residues 33–62; the sequence is LSVCSKICFAIGGAPYQITGCALGFFLQIF. Topologically, residues 63-73 are extracellular; the sequence is LLDIAQVPPFY. The chain crosses the membrane as a helical span at residues 74-94; it reads ASIILFSGRVWDAITDPLVGF. Topologically, residues 95 to 106 are cytoplasmic; it reads FVSKSSWTRLGR. Residues 107–126 form a helical membrane-spanning segment; that stretch reads LLPWVVFSTPFAVVSYLLIW. Topologically, residues 127-137 are extracellular; the sequence is FVPGFSGVSMV. Residues 138 to 162 form a helical membrane-spanning segment; that stretch reads IWYLVFYCLFQTLVTCFHVPYSALT. At 163-169 the chain is on the cytoplasmic side; sequence MFISKEQ. Residues 170 to 201 form a helical membrane-spanning segment; it reads SDRDSATGYRMTVEVLGTVLGTAIQGQIVGRE. Residues 202 to 226 are Extracellular-facing; sequence NTPCVEHIRETHLYNTSVIMEDLNI. A disulfide bridge links C205 with C458. N216 and N225 each carry an N-linked (GlcNAc...) asparagine glycan. Residues 227-260 traverse the membrane as a helical segment; sequence THDVESLSSTRDAYMIAAGVICAIYVLCAIILTL. Topologically, residues 261–291 are cytoplasmic; the sequence is GVREKRDAYELLSDQPFSFWQGLKLVMSHKP. A helical membrane pass occupies residues 292–318; that stretch reads YIKLITGFLFTSLAFMLLEGNFALFLT. Topologically, residues 319-329 are extracellular; the sequence is YTMGFRRDFQN. The helical transmembrane segment at 330–348 threads the bilayer; the sequence is ILLVVMLSATLTVPFWQWF. Residues 349 to 352 lie on the Cytoplasmic side of the membrane; it reads LTRF. The helical transmembrane segment at 353–374 threads the bilayer; it reads GKKTAVYFGISSVIPFLILVVL. The Extracellular segment spans residues 375-377; that stretch reads MES. The helical transmembrane segment at 378-414 threads the bilayer; it reads NLILAYVVAVAAGLSVAAAFLLPWSMLPDVIDDFILK. At 415–424 the chain is on the cytoplasmic side; it reads NPDSHGHEPI. The chain crosses the membrane as a helical span at residues 425–451; sequence FFSFYVFFTKFASGVSLGISTLSLDFA. The Extracellular portion of the chain corresponds to 452–463; it reads GYQTRACSQPEQ. The chain crosses the membrane as a helical span at residues 464–487; sequence VNLTLKMLICVAPVILILLGLLLF. Topologically, residues 488–525 are cytoplasmic; that stretch reads ILYPINEEKRKQNKKALQLIRESNRDSDSDSLELASNV.

The protein belongs to the major facilitator superfamily.

The protein resides in the cell membrane. It is found in the endoplasmic reticulum membrane. The enzyme catalyses a 1-acyl-sn-glycero-3-phosphocholine(in) + Na(+)(in) = a 1-acyl-sn-glycero-3-phosphocholine(out) + Na(+)(out). It catalyses the reaction 1-(4Z,7Z,10Z,13Z,16Z,19Z-docosahexaenoyl)-sn-glycero-3-phosphocholine(in) + Na(+)(in) = 1-(4Z,7Z,10Z,13Z,16Z,19Z-docosahexaenoyl)-sn-glycero-3-phosphocholine(out) + Na(+)(out). It carries out the reaction 1-(9Z-octadecenoyl)-sn-glycero-3-phosphocholine(in) + Na(+)(in) = 1-(9Z-octadecenoyl)-sn-glycero-3-phosphocholine(out) + Na(+)(out). The catalysed reaction is 1-hexadecanoyl-sn-glycero-3-phosphocholine(in) + Na(+)(in) = 1-hexadecanoyl-sn-glycero-3-phosphocholine(out) + Na(+)(out). The enzyme catalyses a 1-acyl-sn-glycero-3-phosphoethanolamine(in) + Na(+)(in) = a 1-acyl-sn-glycero-3-phosphoethanolamine(out) + Na(+)(out). In terms of biological role, sodium-dependent lysophosphatidylcholine (LPC) symporter, which plays an essential role for blood-brain barrier formation and function. Specifically expressed in endothelium of the blood-brain barrier of micro-vessels and transports LPC into the brain. Transport of LPC is essential because it constitutes the major mechanism by which docosahexaenoic acid (DHA), an omega-3 fatty acid that is essential for normal brain growth and cognitive function, enters the brain. Transports LPC carrying long-chain fatty acids such LPC oleate and LPC palmitate with a minimum acyl chain length of 14 carbons. Does not transport docosahexaenoic acid in unesterified fatty acid. The sequence is that of Sodium-dependent lysophosphatidylcholine symporter 1 (mfsd2a) from Xenopus tropicalis (Western clawed frog).